Here is a 274-residue protein sequence, read N- to C-terminus: Oxidoreductase stcQ (274 aa).

This sequence belongs to the avfA family.

Its pathway is mycotoxin biosynthesis; sterigmatocystin biosynthesis. Oxidoreductase; part of the gene cluster that mediates the biosynthesis of sterigmatocystin (ST), a polyketide-derived furanocoumarin which is part of the most toxic and carcinogenic compounds among the known mycotoxins. The first step in the biosynthesis of sterigmatocystin is the production of hexanoate by the fatty acid synthase (FAS) units stcJ and stcK. The polyketide backbone is assembled by the non-reducing polyketide synthase stcA by condensation of the starter hexanoyl-CoA and 7 malonyl-CoA extender units followed by cyclization and release of norsolorinic acid. Norsolorinic acid is the first stable intermediate in the biosynthesis of sterigmatocystin and is converted into averantin (AVN) by the ketoreductase stcE which reduces the hexanoate ketone to an alcohol. Averantin is then oxidized into 5'-hydroxyaverantin (HAVN) by the cytochrome P450 monooxygenase stcF. 5'-hydroxyaverantin is further converted to 5'-oxyaverantin (OAVN) by the 5'-hydroxyaverantin dehydrogenase stcG. The next step is the conversion of OAVN into averufin (AVF) which is catalyzed by a yet to be identified enzyme. The cytochrome P450 monooxygenase stcB and the flavin-binding monooxygenase stcW are both required for the conversion of averufin to 1-hydroxyversicolorone. The esterase stcI probably catalyzes the formation of versiconal hemiacetal acetate from 1-hydroxyversicolorone. The oxydoreductase stcN then probably catalyzes the biosynthetic step from versiconal to versicolorin B (VERB). The next step is performed by the versicolorin B desaturase stcL to produce versicolorin A (VERA). The ketoreductase stcU and the cytochrome P450 monooxygenase stcS are involved in the conversion of versicolorin A to demethylsterigmatocystin. The Baeyer-Villiger oxidas stcQ and the reductase stcR might be involved in the biosynthetic step from versicolorin A to demethylsterigmatocystin. The final step in the biosynthesis of sterigmatocystin is the methylation of demethylsterigmatocystin catalyzed by the methyltransferase stcP. The polypeptide is Oxidoreductase stcQ (Emericella nidulans (strain FGSC A4 / ATCC 38163 / CBS 112.46 / NRRL 194 / M139) (Aspergillus nidulans)).